The primary structure comprises 357 residues: Alanine racemase, catabolic (357 aa).

The Proton acceptor; specific for D-alanine role is filled by lysine 33. An N6-(pyridoxal phosphate)lysine modification is found at lysine 33. Arginine 129 is a binding site for substrate. Tyrosine 253 (proton acceptor; specific for L-alanine) is an active-site residue. Methionine 301 provides a ligand contact to substrate.

Belongs to the alanine racemase family. Requires pyridoxal 5'-phosphate as cofactor.

It catalyses the reaction L-alanine = D-alanine. Its pathway is amino-acid biosynthesis; D-alanine biosynthesis; D-alanine from L-alanine: step 1/1. In terms of biological role, isomerizes L-alanine to D-alanine which is then likely oxidized to pyruvate by DadA. Shows racemase activity with both alanine stereoisomers, negligible activity with D-cysteine and L-serine, and exhibits no activity with the remaining natural chiral amino acids. This chain is Alanine racemase, catabolic, found in Pseudomonas putida (strain ATCC 47054 / DSM 6125 / CFBP 8728 / NCIMB 11950 / KT2440).